The sequence spans 342 residues: Probable dual-specificity RNA methyltransferase RlmN (342 aa).

Residue glutamate 91 is the Proton acceptor of the active site. Positions 97–327 (YRYGNTVCLS…VTVRRELGDE (231 aa)) constitute a Radical SAM core domain. A disulfide bond links cysteine 104 and cysteine 332. Residues cysteine 111, cysteine 115, and cysteine 118 each contribute to the [4Fe-4S] cluster site. Residues 158–159 (GE), serine 190, 213–215 (SLH), and asparagine 289 contribute to the S-adenosyl-L-methionine site. The active-site S-methylcysteine intermediate is cysteine 332.

It belongs to the radical SAM superfamily. RlmN family. The cofactor is [4Fe-4S] cluster.

Its subcellular location is the cytoplasm. It carries out the reaction adenosine(2503) in 23S rRNA + 2 reduced [2Fe-2S]-[ferredoxin] + 2 S-adenosyl-L-methionine = 2-methyladenosine(2503) in 23S rRNA + 5'-deoxyadenosine + L-methionine + 2 oxidized [2Fe-2S]-[ferredoxin] + S-adenosyl-L-homocysteine. The catalysed reaction is adenosine(37) in tRNA + 2 reduced [2Fe-2S]-[ferredoxin] + 2 S-adenosyl-L-methionine = 2-methyladenosine(37) in tRNA + 5'-deoxyadenosine + L-methionine + 2 oxidized [2Fe-2S]-[ferredoxin] + S-adenosyl-L-homocysteine. Functionally, specifically methylates position 2 of adenine 2503 in 23S rRNA and position 2 of adenine 37 in tRNAs. The chain is Probable dual-specificity RNA methyltransferase RlmN from Carboxydothermus hydrogenoformans (strain ATCC BAA-161 / DSM 6008 / Z-2901).